The primary structure comprises 391 residues: Formate-dependent phosphoribosylglycinamide formyltransferase (391 aa).

Residues E20–L21 and E80 contribute to the N(1)-(5-phospho-beta-D-ribosyl)glycinamide site. Residues R112, K153, S158–Q163, E193–I196, and E201 contribute to the ATP site. The ATP-grasp domain maps to R117 to T306. The Mg(2+) site is built by E265 and E277. N(1)-(5-phospho-beta-D-ribosyl)glycinamide contacts are provided by residues D284, K354, and R361–R362.

This sequence belongs to the PurK/PurT family. As to quaternary structure, homodimer.

The catalysed reaction is N(1)-(5-phospho-beta-D-ribosyl)glycinamide + formate + ATP = N(2)-formyl-N(1)-(5-phospho-beta-D-ribosyl)glycinamide + ADP + phosphate + H(+). The protein operates within purine metabolism; IMP biosynthesis via de novo pathway; N(2)-formyl-N(1)-(5-phospho-D-ribosyl)glycinamide from N(1)-(5-phospho-D-ribosyl)glycinamide (formate route): step 1/1. In terms of biological role, involved in the de novo purine biosynthesis. Catalyzes the transfer of formate to 5-phospho-ribosyl-glycinamide (GAR), producing 5-phospho-ribosyl-N-formylglycinamide (FGAR). Formate is provided by PurU via hydrolysis of 10-formyl-tetrahydrofolate. The sequence is that of Formate-dependent phosphoribosylglycinamide formyltransferase from Vibrio parahaemolyticus serotype O3:K6 (strain RIMD 2210633).